Here is a 253-residue protein sequence, read N- to C-terminus: Uridine phosphorylase (253 aa).

Belongs to the PNP/UDP phosphorylase family. In terms of assembly, homohexamer.

The protein resides in the cytoplasm. It carries out the reaction uridine + phosphate = alpha-D-ribose 1-phosphate + uracil. It participates in pyrimidine metabolism; UMP biosynthesis via salvage pathway; uracil from uridine (phosphorylase route): step 1/1. Catalyzes the reversible phosphorylytic cleavage of uridine to uracil and ribose-1-phosphate. Shows weak activity towards deoxyuridine and thymidine. The produced molecules are then utilized as carbon and energy sources or in the rescue of pyrimidine bases for nucleotide synthesis. This is Uridine phosphorylase from Escherichia coli (strain K12).